A 402-amino-acid polypeptide reads, in one-letter code: B3 domain-containing protein Os01g0723500 (402 aa).

The TF-B3 1 DNA-binding region spans arginine 18 to threonine 121. Residues glutamate 126–leucine 203 are disordered. Residues aspartate 152–glycine 162 show a composition bias toward basic and acidic residues. A compositionally biased stretch (polar residues) spans serine 173–threonine 186. The segment at residues cysteine 289–valine 381 is a DNA-binding region (TF-B3 2).

The protein localises to the nucleus. The protein is B3 domain-containing protein Os01g0723500 of Oryza sativa subsp. japonica (Rice).